We begin with the raw amino-acid sequence, 282 residues long: Undecaprenyl-diphosphatase (282 aa).

The next 8 membrane-spanning stretches (helical) occupy residues 1-21, 39-59, 85-105, 115-135, 153-173, 193-213, 229-249, and 259-279; these read MTLIQAILLGIIQGLTEFLPI, PGAAFTAIIQIGTLGAVMLYF, AKMGWMIAAGTLPIVAFGLLF, SLYWISGALIILALVLSLAEW, IGWKEALLIGLAQAIALIPGS, AARFSFLLSLPAVFAAGAFEL, NLAVATITSGIVGYLSIAFLL, and IFIAYRLAAGAGLLLLLGGGT.

This sequence belongs to the UppP family.

The protein localises to the cell inner membrane. The enzyme catalyses di-trans,octa-cis-undecaprenyl diphosphate + H2O = di-trans,octa-cis-undecaprenyl phosphate + phosphate + H(+). In terms of biological role, catalyzes the dephosphorylation of undecaprenyl diphosphate (UPP). Confers resistance to bacitracin. This chain is Undecaprenyl-diphosphatase, found in Chlorobium luteolum (strain DSM 273 / BCRC 81028 / 2530) (Pelodictyon luteolum).